Reading from the N-terminus, the 315-residue chain is ATP synthase gamma chain (315 aa).

This sequence belongs to the ATPase gamma chain family. In terms of assembly, F-type ATPases have 2 components, CF(1) - the catalytic core - and CF(0) - the membrane proton channel. CF(1) has five subunits: alpha(3), beta(3), gamma(1), delta(1), epsilon(1). CF(0) has three main subunits: a, b and c.

The protein localises to the cell membrane. Produces ATP from ADP in the presence of a proton gradient across the membrane. The gamma chain is believed to be important in regulating ATPase activity and the flow of protons through the CF(0) complex. In Latilactobacillus sakei subsp. sakei (strain 23K) (Lactobacillus sakei subsp. sakei), this protein is ATP synthase gamma chain.